The chain runs to 323 residues: tRNA dimethylallyltransferase (323 aa).

13 to 20 (GPTASGKT) lines the ATP pocket. A substrate-binding site is contributed by 15–20 (TASGKT). Interaction with substrate tRNA stretches follow at residues 42–45 (DSAL), 166–170 (QRIQR), 251–256 (RCVGYR), and 284–291 (KRQITWLR).

This sequence belongs to the IPP transferase family. As to quaternary structure, monomer. Mg(2+) is required as a cofactor.

The catalysed reaction is adenosine(37) in tRNA + dimethylallyl diphosphate = N(6)-dimethylallyladenosine(37) in tRNA + diphosphate. In terms of biological role, catalyzes the transfer of a dimethylallyl group onto the adenine at position 37 in tRNAs that read codons beginning with uridine, leading to the formation of N6-(dimethylallyl)adenosine (i(6)A). The protein is tRNA dimethylallyltransferase of Acidovorax ebreus (strain TPSY) (Diaphorobacter sp. (strain TPSY)).